The primary structure comprises 141 residues: Large ribosomal subunit protein uL11 (141 aa).

It belongs to the universal ribosomal protein uL11 family. In terms of assembly, part of the ribosomal stalk of the 50S ribosomal subunit. Interacts with L10 and the large rRNA to form the base of the stalk. L10 forms an elongated spine to which L12 dimers bind in a sequential fashion forming a multimeric L10(L12)X complex. Post-translationally, one or more lysine residues are methylated.

Forms part of the ribosomal stalk which helps the ribosome interact with GTP-bound translation factors. In Geobacillus thermodenitrificans (strain NG80-2), this protein is Large ribosomal subunit protein uL11.